Here is a 422-residue protein sequence, read N- to C-terminus: Probable biofilm formation methyltransferase WspC (422 aa).

In terms of domain architecture, CheR-type methyltransferase spans 1 to 264 (MNDRFERLLK…LSFVFRRTSE (264 aa)). S-adenosyl-L-methionine is bound by residues T67, R71, E108, D132, 186 to 187 (NL), and 205 to 206 (RN). Positions 289–316 (ASIRPSPPPPAKPRQRLSSLVPPASGQP) are disordered. One copy of the TPR repeat lies at 354 to 387 (ATVFYWLGLLSDVAGQEQEAQDFYRKALYLEPQH).

As to quaternary structure, monomer.

Functionally, involved in biofilm formation. The sequence is that of Probable biofilm formation methyltransferase WspC (wspC) from Pseudomonas aeruginosa (strain ATCC 15692 / DSM 22644 / CIP 104116 / JCM 14847 / LMG 12228 / 1C / PRS 101 / PAO1).